The primary structure comprises 504 residues: L-carnitine/gamma-butyrobetaine antiporter (504 aa).

The next 12 helical transmembrane spans lie at 10–30 (IEPKVFFPPLIIVGILCWLTV), 51–71 (WGWAFEWYMVVMLFGWFWLVF), 92–112 (IFMMFASCTSAAVLFWGSIEI), 143–163 (GPLPWATYSFLSVAFAYFFFV), 195–215 (FYLVALIFAMGTSLGLATPLV), 231–251 (LDAIIITCWIILNAICVACGL), 263–283 (SYLSFLMLGWVFIVSGASFIM), 316–336 (WTVFYWAWWVIYAIQMSIFLA), 347–367 (LCFGMVMGLTASTWILWTVLG), 403–423 (LSTATMWGFFILCFIATVTLI), 446–466 (LLVRIGWSILVGIIGIVLLAL), and 475–495 (AIIAGGCPLFFVNIMVTLSFI).

It belongs to the BCCT transporter (TC 2.A.15) family. CaiT subfamily. As to quaternary structure, homotrimer.

It is found in the cell inner membrane. The catalysed reaction is 4-(trimethylamino)butanoate(in) + (R)-carnitine(out) = 4-(trimethylamino)butanoate(out) + (R)-carnitine(in). It participates in amine and polyamine metabolism; carnitine metabolism. Catalyzes the exchange of L-carnitine for gamma-butyrobetaine. This Escherichia fergusonii (strain ATCC 35469 / DSM 13698 / CCUG 18766 / IAM 14443 / JCM 21226 / LMG 7866 / NBRC 102419 / NCTC 12128 / CDC 0568-73) protein is L-carnitine/gamma-butyrobetaine antiporter.